Reading from the N-terminus, the 122-residue chain is Large ribosomal subunit protein uL14 (122 aa).

The protein belongs to the universal ribosomal protein uL14 family. In terms of assembly, part of the 50S ribosomal subunit. Forms a cluster with proteins L3 and L19. In the 70S ribosome, L14 and L19 interact and together make contacts with the 16S rRNA in bridges B5 and B8.

Binds to 23S rRNA. Forms part of two intersubunit bridges in the 70S ribosome. This Bifidobacterium animalis subsp. lactis (strain AD011) protein is Large ribosomal subunit protein uL14.